The chain runs to 354 residues: Uroporphyrinogen decarboxylase (354 aa).

Substrate contacts are provided by residues 27–31 (RQAGR), Asp77, Tyr154, Ser209, and His327.

It belongs to the uroporphyrinogen decarboxylase family. Homodimer.

It is found in the cytoplasm. The enzyme catalyses uroporphyrinogen III + 4 H(+) = coproporphyrinogen III + 4 CO2. The protein operates within porphyrin-containing compound metabolism; protoporphyrin-IX biosynthesis; coproporphyrinogen-III from 5-aminolevulinate: step 4/4. Functionally, catalyzes the decarboxylation of four acetate groups of uroporphyrinogen-III to yield coproporphyrinogen-III. The chain is Uroporphyrinogen decarboxylase from Shewanella piezotolerans (strain WP3 / JCM 13877).